Consider the following 301-residue polypeptide: Aspartate carbamoyltransferase catalytic subunit (301 aa).

Residues Arg-54 and Thr-55 each contribute to the carbamoyl phosphate site. L-aspartate is bound at residue Lys-82. Residues Arg-104, His-132, and Gln-135 each contribute to the carbamoyl phosphate site. L-aspartate is bound by residues Arg-165 and Arg-217. 2 residues coordinate carbamoyl phosphate: Gly-257 and Pro-258.

It belongs to the aspartate/ornithine carbamoyltransferase superfamily. ATCase family. As to quaternary structure, heterododecamer (2C3:3R2) of six catalytic PyrB chains organized as two trimers (C3), and six regulatory PyrI chains organized as three dimers (R2).

It catalyses the reaction carbamoyl phosphate + L-aspartate = N-carbamoyl-L-aspartate + phosphate + H(+). It participates in pyrimidine metabolism; UMP biosynthesis via de novo pathway; (S)-dihydroorotate from bicarbonate: step 2/3. Functionally, catalyzes the condensation of carbamoyl phosphate and aspartate to form carbamoyl aspartate and inorganic phosphate, the committed step in the de novo pyrimidine nucleotide biosynthesis pathway. The sequence is that of Aspartate carbamoyltransferase catalytic subunit from Thermus aquaticus.